Here is a 293-residue protein sequence, read N- to C-terminus: 4-hydroxy-tetrahydrodipicolinate synthase (293 aa).

Thr45 provides a ligand contact to pyruvate. Catalysis depends on Tyr133, which acts as the Proton donor/acceptor. Lys162 functions as the Schiff-base intermediate with substrate in the catalytic mechanism. Residue Ile204 coordinates pyruvate.

It belongs to the DapA family. In terms of assembly, homotetramer; dimer of dimers.

The protein resides in the cytoplasm. The enzyme catalyses L-aspartate 4-semialdehyde + pyruvate = (2S,4S)-4-hydroxy-2,3,4,5-tetrahydrodipicolinate + H2O + H(+). It functions in the pathway amino-acid biosynthesis; L-lysine biosynthesis via DAP pathway; (S)-tetrahydrodipicolinate from L-aspartate: step 3/4. Catalyzes the condensation of (S)-aspartate-beta-semialdehyde [(S)-ASA] and pyruvate to 4-hydroxy-tetrahydrodipicolinate (HTPA). The chain is 4-hydroxy-tetrahydrodipicolinate synthase from Chelativorans sp. (strain BNC1).